A 409-amino-acid chain; its full sequence is Growth-regulating factor 8 (409 aa).

Gly residues-rich tracts occupy residues 1 to 10 (MLSSCGGHGH) and 27 to 36 (QQGGGGGGGQ). Residues 1-81 (MLSSCGGHGH…GGGGQMLSFS (81 aa)) form a disordered region. A compositionally biased stretch (low complexity) spans 56–68 (SSSSFLGSTSSSC). The QLQ domain maps to 107 to 142 (PFTPTQWMELEHQALIYKHIAANVSVPSSLLLPIRR). The WRC domain maps to 158–202 (DVEPRRCRRTDGKKWRCSRDAVGDQKYCERHINRGRHRSRKHVEG). Short sequence motifs (bipartite nuclear localization signal) lie at residues 163 to 173 (RCRRTDGKKWR) and 191 to 198 (RGRHRSRK). The disordered stretch occupies residues 221-242 (SSRGHTVARQKQVKGSAATVSD).

It belongs to the GRF family.

It localises to the nucleus. Its function is as follows. Transcription activator that plays a regulatory role in gibberellin-induced stem elongation. In Oryza sativa subsp. japonica (Rice), this protein is Growth-regulating factor 8 (GRF8).